Reading from the N-terminus, the 404-residue chain is Pleckstrin homology domain-containing family A member 1 (404 aa).

PH domains follow at residues 7 to 112 (QNRI…KAIK) and 191 to 289 (AVIK…GAIV). 2 disordered regions span residues 291-332 (QRGP…RSNS) and 355-404 (NFKV…VSDV). Residues 316–332 (TNAATATSHSTASRSNS) are compositionally biased toward low complexity. A phosphoserine mark is found at Ser-332 and Ser-362.

Interacts with MPDZ and PTPN13. In terms of tissue distribution, highly expressed in skeletal muscle, thymus, pancreas, placenta and lung. Detected at low levels in brain, heart, peripheral blood leukocytes, testis, ovary, spinal cord, thyroid, kidney, liver, small intestine and colon.

The protein resides in the cytoplasm. It localises to the cell membrane. Its subcellular location is the nucleus. In terms of biological role, binds specifically to phosphatidylinositol 3,4-diphosphate (PtdIns3,4P2), but not to other phosphoinositides. May recruit other proteins to the plasma membrane. The chain is Pleckstrin homology domain-containing family A member 1 (PLEKHA1) from Homo sapiens (Human).